Consider the following 528-residue polypeptide: Importin subunit alpha-7 (528 aa).

The IBB domain maps to 1–56 (MKGGETMSVRRSGYKAVVDGVGGRRRREDDMVEIRKAKREESLLKKRREALPHSPS). 8 ARM repeats span residues 93 to 133 (NVRV…NIAS), 136 to 175 (SENT…NISG), 178 to 218 (PRCR…NLCR), 220 to 259 (KPQP…YLSD), 262 to 301 (NEKI…NIVT), 304 to 344 (DSQT…NITA), 347 to 386 (QSQI…NAIA), and 390 to 429 (YKQI…KILK).

It belongs to the importin alpha family. In terms of assembly, forms a complex with importin subunit beta-1.

It localises to the nucleus envelope. Binds to conventional NLS motifs and mediates nuclear protein import across the nuclear envelope. Acts as a cellular receptor for the nuclear import of the virD2 protein of Agrobacterium, but is not essential for Agrobacterium-mediated root transformation. This chain is Importin subunit alpha-7, found in Arabidopsis thaliana (Mouse-ear cress).